A 206-amino-acid polypeptide reads, in one-letter code: Stage III sporulation protein AF (206 aa).

Helical transmembrane passes span M1 to I21 and A34 to F54.

The protein localises to the cell membrane. The chain is Stage III sporulation protein AF (spoIIIAF) from Bacillus subtilis (strain 168).